Reading from the N-terminus, the 202-residue chain is LexA repressor (202 aa).

A DNA-binding region (H-T-H motif) is located at residues 28 to 48 (RAEIAAQLGFRSPNAAEEHLK). Active-site for autocatalytic cleavage activity residues include S119 and K156.

Belongs to the peptidase S24 family. Homodimer.

The enzyme catalyses Hydrolysis of Ala-|-Gly bond in repressor LexA.. Functionally, represses a number of genes involved in the response to DNA damage (SOS response), including recA and lexA. Binds to the 16 bp palindromic sequence 5'-CTGTATATATATACAG-3'. In the presence of single-stranded DNA, RecA interacts with LexA causing an autocatalytic cleavage which disrupts the DNA-binding part of LexA, leading to derepression of the SOS regulon and eventually DNA repair. The protein is LexA repressor of Erwinia tasmaniensis (strain DSM 17950 / CFBP 7177 / CIP 109463 / NCPPB 4357 / Et1/99).